The following is a 401-amino-acid chain: Argininosuccinate synthase (401 aa).

9-17 (AYSGGLDTS) lines the ATP pocket. Tyr86 contacts L-citrulline. Gly116 is an ATP binding site. L-aspartate-binding residues include Thr118, Asn122, and Asp123. Asn122 lines the L-citrulline pocket. The L-citrulline site is built by Arg126, Ser174, Ser183, Glu259, and Tyr271.

Belongs to the argininosuccinate synthase family. Type 1 subfamily. Homotetramer.

It localises to the cytoplasm. It catalyses the reaction L-citrulline + L-aspartate + ATP = 2-(N(omega)-L-arginino)succinate + AMP + diphosphate + H(+). The protein operates within amino-acid biosynthesis; L-arginine biosynthesis; L-arginine from L-ornithine and carbamoyl phosphate: step 2/3. This chain is Argininosuccinate synthase, found in Bacillus cereus (strain B4264).